The sequence spans 240 residues: Phosphoribosylaminoimidazole-succinocarboxamide synthase (240 aa).

The protein belongs to the SAICAR synthetase family.

It catalyses the reaction 5-amino-1-(5-phospho-D-ribosyl)imidazole-4-carboxylate + L-aspartate + ATP = (2S)-2-[5-amino-1-(5-phospho-beta-D-ribosyl)imidazole-4-carboxamido]succinate + ADP + phosphate + 2 H(+). The protein operates within purine metabolism; IMP biosynthesis via de novo pathway; 5-amino-1-(5-phospho-D-ribosyl)imidazole-4-carboxamide from 5-amino-1-(5-phospho-D-ribosyl)imidazole-4-carboxylate: step 1/2. This chain is Phosphoribosylaminoimidazole-succinocarboxamide synthase, found in Wolbachia sp. subsp. Brugia malayi (strain TRS).